We begin with the raw amino-acid sequence, 130 residues long: Phosphoribosyl-AMP cyclohydrolase 1 (130 aa).

Residue D77 coordinates Mg(2+). C78 lines the Zn(2+) pocket. The Mg(2+) site is built by D79 and D81. Positions 95 and 102 each coordinate Zn(2+).

Belongs to the PRA-CH family. In terms of assembly, homodimer. Mg(2+) serves as cofactor. Zn(2+) is required as a cofactor.

The protein resides in the cytoplasm. The catalysed reaction is 1-(5-phospho-beta-D-ribosyl)-5'-AMP + H2O = 1-(5-phospho-beta-D-ribosyl)-5-[(5-phospho-beta-D-ribosylamino)methylideneamino]imidazole-4-carboxamide. It participates in amino-acid biosynthesis; L-histidine biosynthesis; L-histidine from 5-phospho-alpha-D-ribose 1-diphosphate: step 3/9. Catalyzes the hydrolysis of the adenine ring of phosphoribosyl-AMP. This is Phosphoribosyl-AMP cyclohydrolase 1 from Pseudomonas fluorescens (strain ATCC BAA-477 / NRRL B-23932 / Pf-5).